We begin with the raw amino-acid sequence, 353 residues long: Photosystem II protein D1 (353 aa).

Threonine 2 is modified (N-acetylthreonine). Residue threonine 2 is modified to Phosphothreonine. Helical transmembrane passes span 29–46, 118–133, and 142–156; these read YIGW…TATS, HFLL…EWEL, and WIAV…AATA. Histidine 118 contacts chlorophyll a. Tyrosine 126 is a binding site for pheophytin a. [CaMn4O5] cluster is bound by residues aspartate 170 and glutamate 189. A helical transmembrane segment spans residues 197-218; sequence FHMLGVAGVFGGSLFSAMHGSL. Position 198 (histidine 198) interacts with chlorophyll a. A quinone contacts are provided by residues histidine 215 and 264 to 265; that span reads SF. Residue histidine 215 coordinates Fe cation. A Fe cation-binding site is contributed by histidine 272. Residues 274–288 form a helical membrane-spanning segment; the sequence is FLAAWPVVGIWFTAL. Residues histidine 332, glutamate 333, aspartate 342, and alanine 344 each coordinate [CaMn4O5] cluster. Positions 345-353 are excised as a propeptide; that stretch reads AVEVPSTNG.

This sequence belongs to the reaction center PufL/M/PsbA/D family. In terms of assembly, PSII is composed of 1 copy each of membrane proteins PsbA, PsbB, PsbC, PsbD, PsbE, PsbF, PsbH, PsbI, PsbJ, PsbK, PsbL, PsbM, PsbT, PsbX, PsbY, PsbZ, Psb30/Ycf12, at least 3 peripheral proteins of the oxygen-evolving complex and a large number of cofactors. It forms dimeric complexes. Requires The D1/D2 heterodimer binds P680, chlorophylls that are the primary electron donor of PSII, and subsequent electron acceptors. It shares a non-heme iron and each subunit binds pheophytin, quinone, additional chlorophylls, carotenoids and lipids. D1 provides most of the ligands for the Mn4-Ca-O5 cluster of the oxygen-evolving complex (OEC). There is also a Cl(-1) ion associated with D1 and D2, which is required for oxygen evolution. The PSII complex binds additional chlorophylls, carotenoids and specific lipids. as cofactor. Tyr-161 forms a radical intermediate that is referred to as redox-active TyrZ, YZ or Y-Z. In terms of processing, C-terminally processed by CTPA; processing is essential to allow assembly of the oxygen-evolving complex and thus photosynthetic growth.

The protein resides in the plastid. It is found in the chloroplast thylakoid membrane. The enzyme catalyses 2 a plastoquinone + 4 hnu + 2 H2O = 2 a plastoquinol + O2. Photosystem II (PSII) is a light-driven water:plastoquinone oxidoreductase that uses light energy to abstract electrons from H(2)O, generating O(2) and a proton gradient subsequently used for ATP formation. It consists of a core antenna complex that captures photons, and an electron transfer chain that converts photonic excitation into a charge separation. The D1/D2 (PsbA/PsbD) reaction center heterodimer binds P680, the primary electron donor of PSII as well as several subsequent electron acceptors. The polypeptide is Photosystem II protein D1 (Calycanthus floridus var. glaucus (Eastern sweetshrub)).